The chain runs to 365 residues: MKKQYRIAVLPGDGIGPEVMKEAYKILKILQNYFSLHIEIKEFNIGGIALDKEGVALPKDTLLGCENSDAILFGSVGGKKWNNLPIEKRPERASLLPLRKHFNLFYNLRPAKLYSELRFLSPLRSKTXIKNGFDILCIRELTGGIYFGEPRGRLKKNNIEYAFDTEVYYDYEINRIAHVAFQLARTRKNKVCSIDKANVLNSSLLWREIVTKVSKNYPDVHLSHLYIDNATMQIIQNPNQFDILLCSNLFGDILSDECAIITGSIGMLPSASLNEKNFGLYEPAGGSAPDIAGKNIANPIAQILSLSMLVRYGMNLKKIANKIDQSVISVLKKGYRTFDISDDNNXFLKTNEMGDVIADALINGE.

Gly78–Glu91 serves as a coordination point for NAD(+). Substrate contacts are provided by Arg99, Arg109, Arg139, and Asp228. The Mg(2+) site is built by Asp228, Asp252, and Asp256. Residue Gly286–Asn298 coordinates NAD(+).

Belongs to the isocitrate and isopropylmalate dehydrogenases family. LeuB type 1 subfamily. Homodimer. Requires Mg(2+) as cofactor. It depends on Mn(2+) as a cofactor.

The protein localises to the cytoplasm. It catalyses the reaction (2R,3S)-3-isopropylmalate + NAD(+) = 4-methyl-2-oxopentanoate + CO2 + NADH. It functions in the pathway amino-acid biosynthesis; L-leucine biosynthesis; L-leucine from 3-methyl-2-oxobutanoate: step 3/4. In terms of biological role, catalyzes the oxidation of 3-carboxy-2-hydroxy-4-methylpentanoate (3-isopropylmalate) to 3-carboxy-4-methyl-2-oxopentanoate. The product decarboxylates to 4-methyl-2 oxopentanoate. In Buchnera aphidicola subsp. Macrosiphoniella ludovicianae, this protein is 3-isopropylmalate dehydrogenase.